We begin with the raw amino-acid sequence, 121 residues long: Large ribosomal subunit protein uL18 (121 aa).

The protein belongs to the universal ribosomal protein uL18 family. Part of the 50S ribosomal subunit; part of the 5S rRNA/L5/L18/L25 subcomplex. Contacts the 5S and 23S rRNAs.

This is one of the proteins that bind and probably mediate the attachment of the 5S RNA into the large ribosomal subunit, where it forms part of the central protuberance. This chain is Large ribosomal subunit protein uL18, found in Moorella thermoacetica (strain ATCC 39073 / JCM 9320).